The sequence spans 1595 residues: Pentafunctional AROM polypeptide (1595 aa).

Residues 1–384 (MGVPTKISIL…HEPRASTVSN (384 aa)) form a 3-dehydroquinate synthase region. NAD(+)-binding positions include 44-46 (DTN), 81-84 (ESSK), 114-116 (GGV), and Asp-119. Arg-130 provides a ligand contact to 7-phospho-2-dehydro-3-deoxy-D-arabino-heptonate. 139 to 140 (TT) serves as a coordination point for NAD(+). 7-phospho-2-dehydro-3-deoxy-D-arabino-heptonate contacts are provided by Asp-146 and Lys-152. Lys-161 lines the NAD(+) pocket. 7-phospho-2-dehydro-3-deoxy-D-arabino-heptonate is bound at residue Asn-162. Residues 179–182 (FLNT) and Asn-190 contribute to the NAD(+) site. Glu-194 provides a ligand contact to Zn(2+). Residues 194-197 (EVIK) and Lys-250 contribute to the 7-phospho-2-dehydro-3-deoxy-D-arabino-heptonate site. The active-site Proton acceptor; for 3-dehydroquinate synthase activity is the Glu-260. Residues 264–268 (RNLLN) and His-271 contribute to the 7-phospho-2-dehydro-3-deoxy-D-arabino-heptonate site. His-271 provides a ligand contact to Zn(2+). Residue His-275 is the Proton acceptor; for 3-dehydroquinate synthase activity of the active site. Residues His-287 and Lys-356 each coordinate 7-phospho-2-dehydro-3-deoxy-D-arabino-heptonate. His-287 is a Zn(2+) binding site. Residues 397 to 842 (VSPGVPKGLD…WDSLAQTFKV (446 aa)) form an EPSP synthase region. Cys-824 (for EPSP synthase activity) is an active-site residue. The interval 866–1057 (ASIFIIGMRG…RRKENTFFVS (192 aa)) is shikimate kinase. 872 to 879 (GMRGAGKT) is a binding site for ATP. A 3-dehydroquinase region spans residues 1058–1278 (LTLPDLSLAA…AAPGQLSARE (221 aa)). His-1181 functions as the Proton acceptor; for 3-dehydroquinate dehydratase activity in the catalytic mechanism. Residue Lys-1209 is the Schiff-base intermediate with substrate; for 3-dehydroquinate dehydratase activity of the active site. Residues 1291-1595 (AKKFAVIGNP…MGVSPSEDIL (305 aa)) are shikimate dehydrogenase.

The protein in the N-terminal section; belongs to the sugar phosphate cyclases superfamily. Dehydroquinate synthase family. It in the 2nd section; belongs to the EPSP synthase family. This sequence in the 3rd section; belongs to the shikimate kinase family. In the 4th section; belongs to the type-I 3-dehydroquinase family. The protein in the C-terminal section; belongs to the shikimate dehydrogenase family. As to quaternary structure, homodimer. It depends on Zn(2+) as a cofactor.

It localises to the cytoplasm. The enzyme catalyses 7-phospho-2-dehydro-3-deoxy-D-arabino-heptonate = 3-dehydroquinate + phosphate. It catalyses the reaction 3-dehydroquinate = 3-dehydroshikimate + H2O. It carries out the reaction shikimate + NADP(+) = 3-dehydroshikimate + NADPH + H(+). The catalysed reaction is shikimate + ATP = 3-phosphoshikimate + ADP + H(+). The enzyme catalyses 3-phosphoshikimate + phosphoenolpyruvate = 5-O-(1-carboxyvinyl)-3-phosphoshikimate + phosphate. It participates in metabolic intermediate biosynthesis; chorismate biosynthesis; chorismate from D-erythrose 4-phosphate and phosphoenolpyruvate: step 2/7. It functions in the pathway metabolic intermediate biosynthesis; chorismate biosynthesis; chorismate from D-erythrose 4-phosphate and phosphoenolpyruvate: step 3/7. Its pathway is metabolic intermediate biosynthesis; chorismate biosynthesis; chorismate from D-erythrose 4-phosphate and phosphoenolpyruvate: step 4/7. The protein operates within metabolic intermediate biosynthesis; chorismate biosynthesis; chorismate from D-erythrose 4-phosphate and phosphoenolpyruvate: step 5/7. It participates in metabolic intermediate biosynthesis; chorismate biosynthesis; chorismate from D-erythrose 4-phosphate and phosphoenolpyruvate: step 6/7. Its function is as follows. The AROM polypeptide catalyzes 5 consecutive enzymatic reactions in prechorismate polyaromatic amino acid biosynthesis. This Ajellomyces capsulatus (strain G186AR / H82 / ATCC MYA-2454 / RMSCC 2432) (Darling's disease fungus) protein is Pentafunctional AROM polypeptide.